A 367-amino-acid chain; its full sequence is Ferrochelatase (367 aa).

2 residues coordinate Fe cation: His226 and Glu307.

This sequence belongs to the ferrochelatase family.

It is found in the cytoplasm. It catalyses the reaction heme b + 2 H(+) = protoporphyrin IX + Fe(2+). Its pathway is porphyrin-containing compound metabolism; protoheme biosynthesis; protoheme from protoporphyrin-IX: step 1/1. Its function is as follows. Catalyzes the ferrous insertion into protoporphyrin IX. This is Ferrochelatase from Burkholderia pseudomallei (strain 1106a).